The primary structure comprises 327 residues: Gamma-resorcylate decarboxylase (327 aa).

4 residues coordinate Zn(2+): E8, H10, H164, and D287. D287 is a catalytic residue.

This sequence belongs to the metallo-dependent hydrolases superfamily. ACMSD family. In terms of assembly, homotetramer. The cofactor is Zn(2+).

It catalyses the reaction 2,6-dihydroxybenzoate + H(+) = resorcinol + CO2. The enzyme catalyses 2,3-dihydroxybenzoate + H(+) = catechol + CO2. It functions in the pathway aromatic compound metabolism. Insensitive to oxygen. Decarboxylation and carboxylation are inhibited by AgNO(3) and by diethyl pyrocarbonate, a histidine residue-specific inhibitor. Decarboxylation is also inhibited by HgCl(2) and activated by MgCl(2). In terms of biological role, involved in the gamma-resorcylate (2,6-dihydroxybenzoate) catabolism. Catalyzes the reversible decarboxylation of gamma-resorcylate to resorcinol. Also catalyzes the decarboxylation of 2,3-dihydroxybenzoate to catechol, but does not act on 2-hydroxybenzoic acid 3-hydroxybenzoic acid, 4-hydroxybenzoic acid, 3,4-dihydroxybenzoic acid, 2,5-dihydroxybenzoic acid, 2,3,4-trihydroxybenzoic acid, 3,4,5-trihydroxybenzoic acid, 4-aminobenzoic acid, o-hydroxyphenylacetic acid and vanillic acid. Resorcinol and catechol can both be carboxylated by the reverse reaction. In Rhizobium radiobacter (Agrobacterium tumefaciens), this protein is Gamma-resorcylate decarboxylase.